The sequence spans 95 residues: Co-chaperonin GroES (95 aa).

It belongs to the GroES chaperonin family. In terms of assembly, heptamer of 7 subunits arranged in a ring. Interacts with the chaperonin GroEL.

The protein localises to the cytoplasm. Together with the chaperonin GroEL, plays an essential role in assisting protein folding. The GroEL-GroES system forms a nano-cage that allows encapsulation of the non-native substrate proteins and provides a physical environment optimized to promote and accelerate protein folding. GroES binds to the apical surface of the GroEL ring, thereby capping the opening of the GroEL channel. In Ruegeria sp. (strain TM1040) (Silicibacter sp.), this protein is Co-chaperonin GroES.